The primary structure comprises 214 residues: tRNA (guanine-N(7)-)-methyltransferase (214 aa).

S-adenosyl-L-methionine contacts are provided by Glu45, Asp70, Asn97, and Asn119. Lys123 contributes to the substrate binding site. The tract at residues 125-130 is interaction with RNA; it reads RHNKRR. Substrate-binding positions include Asp155 and 193–196; that span reads TEYE.

Belongs to the class I-like SAM-binding methyltransferase superfamily. TrmB family.

It catalyses the reaction guanosine(46) in tRNA + S-adenosyl-L-methionine = N(7)-methylguanosine(46) in tRNA + S-adenosyl-L-homocysteine. It functions in the pathway tRNA modification; N(7)-methylguanine-tRNA biosynthesis. Functionally, catalyzes the formation of N(7)-methylguanine at position 46 (m7G46) in tRNA. This chain is tRNA (guanine-N(7)-)-methyltransferase, found in Clostridium novyi (strain NT).